The following is a 64-amino-acid chain: Prokaryotic ubiquitin-like protein UBact (64 aa).

Basic and acidic residues-rich tracts occupy residues 1-12 (MSDLFRMEERRQ) and 33-64 (PDVK…RSGE). The segment at 1–64 (MSDLFRMEER…ARRYRQRSGE (64 aa)) is disordered. Glu64 participates in a covalent cross-link: Isoglutamyl lysine isopeptide (Glu-Lys) (interchain with K-? in acceptor proteins).

The protein belongs to the ubiquitin-like protein UBact family.

Its function is as follows. May function as a protein modifier covalently attached to lysine residues of substrate proteins. This may serve to target the modified proteins for degradation by proteasomes. In Chthonomonas calidirosea (strain DSM 23976 / ICMP 18418 / T49), this protein is Prokaryotic ubiquitin-like protein UBact.